A 364-amino-acid polypeptide reads, in one-letter code: MPKPAIKTAAKPATSSAGKRGKPITPKSVAKPQAAKPKTVSKPKVKPGEKKRLHPRNLHINGYDFPVLMVSYPKLKAFVRPTPYGDLSIDFADPSAVKTLNAALLQHHYGLAFWDIPKGALCPPIPGRVDYLHYLADLLFEGGKVKRAAAIRALDIGTGANGVYAILGHQVYDWQFVASDINPQSLTNVQRIIDNNPSLQGHLSLRRQQDDKAVFKGIIQASDRFELTLCNPPFHGSLKEASQGSLRKVRNLQLNRGEQPKATSATLNFGGQAAELWCQGGEKQFLATMIRESQAFAEQCLWFTSLVSKQENLKPCYQALEKLGVDTVKTIEMQQGNKITRLLAWSFHSQAKRLQWRNQIVSGT.

Low complexity predominate over residues 1–17 (MPKPAIKTAAKPATSSA). The disordered stretch occupies residues 1 to 53 (MPKPAIKTAAKPATSSAGKRGKPITPKSVAKPQAAKPKTVSKPKVKPGEKKRL). Residues 39-53 (TVSKPKVKPGEKKRL) show a composition bias toward basic residues.

The protein belongs to the methyltransferase superfamily. METTL16/RlmF family.

The protein resides in the cytoplasm. The enzyme catalyses adenosine(1618) in 23S rRNA + S-adenosyl-L-methionine = N(6)-methyladenosine(1618) in 23S rRNA + S-adenosyl-L-homocysteine + H(+). Specifically methylates the adenine in position 1618 of 23S rRNA. This Shewanella sp. (strain MR-4) protein is Ribosomal RNA large subunit methyltransferase F.